Reading from the N-terminus, the 278-residue chain is Large ribosomal subunit protein uL2 (278 aa).

Composition is skewed to basic residues over residues 210–219 (RSRWLGKRPQ) and 252–263 (KKSRGIKTRNSK). Positions 210-278 (RSRWLGKRPQ…LIIRHRKGNK (69 aa)) are disordered.

This sequence belongs to the universal ribosomal protein uL2 family. As to quaternary structure, part of the 50S ribosomal subunit. Forms a bridge to the 30S subunit in the 70S ribosome.

In terms of biological role, one of the primary rRNA binding proteins. Required for association of the 30S and 50S subunits to form the 70S ribosome, for tRNA binding and peptide bond formation. It has been suggested to have peptidyltransferase activity; this is somewhat controversial. Makes several contacts with the 16S rRNA in the 70S ribosome. The chain is Large ribosomal subunit protein uL2 from Lactobacillus johnsonii (strain CNCM I-12250 / La1 / NCC 533).